Reading from the N-terminus, the 147-residue chain is Arginine repressor (147 aa).

The protein belongs to the ArgR family.

The protein localises to the cytoplasm. It functions in the pathway amino-acid biosynthesis; L-arginine biosynthesis [regulation]. Regulates arginine biosynthesis genes. In Chlamydia felis (strain Fe/C-56) (Chlamydophila felis), this protein is Arginine repressor.